The primary structure comprises 525 residues: Tigger transposable element-derived protein 2 (525 aa).

Positions 1 to 52 (MLGKRKRVVLTIKDKLDIIKKLEEGISFKKLSVVYGIGESTVRDIKKNKERI) constitute an HTH psq-type domain. 2 consecutive DNA-binding regions (H-T-H motif) follow at residues 28 to 48 (FKKLSVVYGIGESTVRDIKKN) and 100 to 132 (TICAKQAKFFFDALGMEGDFNASSGWLTRFKQR). Positions 67 to 139 (KRKSMKSSTY…KQRHGIPKAA (73 aa)) constitute an HTH CENPB-type domain. The 218-residue stretch at 168–385 (LQPEQIYGAD…VKSSTITKAW (218 aa)) folds into the DDE-1 domain. Residues 442–474 (QVLTDSESAEDQTKAAEQKPSSKSRKTELNPEK) are disordered.

It belongs to the tigger transposable element derived protein family.

It is found in the nucleus. This Homo sapiens (Human) protein is Tigger transposable element-derived protein 2 (TIGD2).